Here is a 304-residue protein sequence, read N- to C-terminus: Acetylglutamate kinase (304 aa).

Residues 64-65 (GG), Arg-86, and Asn-181 each bind substrate.

The protein belongs to the acetylglutamate kinase family. ArgB subfamily.

Its subcellular location is the plastid. The protein resides in the chloroplast. The enzyme catalyses N-acetyl-L-glutamate + ATP = N-acetyl-L-glutamyl 5-phosphate + ADP. It participates in amino-acid biosynthesis; L-arginine biosynthesis; N(2)-acetyl-L-ornithine from L-glutamate: step 2/4. Catalyzes the ATP-dependent phosphorylation of N-acetyl-L-glutamate. The chain is Acetylglutamate kinase from Cyanidium caldarium (Red alga).